Consider the following 1120-residue polypeptide: TBC1 domain family member 8B (1120 aa).

GRAM domains lie at 145-212 and 285-353; these read LKFE…EKTS and EQFN…DKTN. The Rab-GAP TBC domain maps to 487 to 674; sequence GIPETLRGEL…NVVDCFFYDG (188 aa). Positions 858–893 constitute an EF-hand domain; it reads NKDSLALWTFRLLDENSDCLINFKEFSSAIDIMYNG. A disordered region spans residues 1035–1066; that stretch reads SPTSSAKGFSGTVCGSGGPSEEKTGSHLEKDP. Basic and acidic residues predominate over residues 1054-1066; sequence SEEKTGSHLEKDP.

In terms of assembly, interacts (via domain Rab-GAP TBC) with RAB11B (in GTP-bound form). Kidney (at protein level).

The protein resides in the cytoplasm. Its subcellular location is the cytosol. Functionally, involved in vesicular recycling, probably as a RAB11B GTPase-activating protein. This Homo sapiens (Human) protein is TBC1 domain family member 8B (TBC1D8B).